Consider the following 439-residue polypeptide: MFDLPRAAPLDMADSWLTFQAEEEQGQESFSSSVNLDDSLTSLQWLQEFSILNSNEGKTPSSSGDSHGYRQLSGAPCSPLAADPACLGMPHTPGKPISSSTSRASHLGLQPMEEIDYKTNPHVKPPYSYATLICMAMQASKKTKITLSAIYNWITDNFCYFRHADPTWQNSIRHNLSLNKCFMKVPREKDEPGKGGFWKIDPQYADRLINGAMKKRRLPPVQIHPAFASAQAAASSDSKRGSAWQMSVNSESHQLLKAFEEITNEQGWNPLGEHGWNSISDGKSHKRKQPLPKRMFKAPRLSSSPMLSQEEQTELGSLKGDFDWEVIFDSSINGFNFSAFEDLEVTPPLSPVTRSVDLTVHGKHIDCPQQWYPMGQDHAVAQNSLDFDETLLATSFLQHPWEENRNDYLSNSANIEQLFDLNEAFPAELNDWSSLGSYI.

Residues 124-218 (KPPYSYATLI…INGAMKKRRL (95 aa)) constitute a DNA-binding region (fork-head). Positions 273–293 (EHGWNSISDGKSHKRKQPLPK) are disordered. Residues 284 to 293 (SHKRKQPLPK) show a composition bias toward basic residues.

The protein belongs to the FOXJ1 family. In terms of tissue distribution, expressed in two independent areas of stage 10-11 embryos; in the dorsal blastopore lip (Spemann organizer) and shortly after in the ectodermal cells of the animal cap. As development proceeds, cells of the animal cap contribute to the epidermis and show a spotty pattern, which suggests expression in ciliated epidermal cells. Distribution of these cells is uniform in the trunk area of the embryo but more random in the head, being practically absent in the cement gland and olfactory placode. The spotted pattern becomes more dispersed as embryos grow in size. Due to cell movements during gastrulation, expression in the dorsal lip becomes located in the dorsal midline with expression restricted to the neuroectoderm. Expressed transiently in cells of the newly formed neural floor plate in the tail of older tadpoles.

The protein resides in the nucleus. Its function is as follows. Key transcription factor required for motile ciliogenesis. Activates genes essential for motile cilia formation and function. Required for ciliogenesis in multiciliated cells. This is Forkhead box protein J1-A (foxj1-a) from Xenopus laevis (African clawed frog).